Here is a 704-residue protein sequence, read N- to C-terminus: Elongation factor G (704 aa).

Residues 10 to 290 form the tr-type G domain; the sequence is NKVRNIGIMA…AVIDYLPSPL (281 aa). Residues 19-26, 83-87, and 137-140 each bind GTP; these read AHIDAGKT, DTPGH, and NKMD.

It belongs to the TRAFAC class translation factor GTPase superfamily. Classic translation factor GTPase family. EF-G/EF-2 subfamily.

The protein localises to the cytoplasm. In terms of biological role, catalyzes the GTP-dependent ribosomal translocation step during translation elongation. During this step, the ribosome changes from the pre-translocational (PRE) to the post-translocational (POST) state as the newly formed A-site-bound peptidyl-tRNA and P-site-bound deacylated tRNA move to the P and E sites, respectively. Catalyzes the coordinated movement of the two tRNA molecules, the mRNA and conformational changes in the ribosome. In Clavibacter michiganensis subsp. michiganensis (strain NCPPB 382), this protein is Elongation factor G.